A 307-amino-acid chain; its full sequence is Methionyl-tRNA formyltransferase (307 aa).

109 to 112 (SLLP) provides a ligand contact to (6S)-5,6,7,8-tetrahydrofolate.

It belongs to the Fmt family.

It carries out the reaction L-methionyl-tRNA(fMet) + (6R)-10-formyltetrahydrofolate = N-formyl-L-methionyl-tRNA(fMet) + (6S)-5,6,7,8-tetrahydrofolate + H(+). Functionally, attaches a formyl group to the free amino group of methionyl-tRNA(fMet). The formyl group appears to play a dual role in the initiator identity of N-formylmethionyl-tRNA by promoting its recognition by IF2 and preventing the misappropriation of this tRNA by the elongation apparatus. This Dechloromonas aromatica (strain RCB) protein is Methionyl-tRNA formyltransferase.